The chain runs to 3856 residues: Serine/threonine-protein kinase ATM (3856 aa).

Residues 108-162 (VGNLVWVMTKYKKWWPGEVVDFKADAKESFMVRSIGQSHLVSWFASSKLKPFKES) form the PWWP domain. Residues 648 to 681 (GIPDLNGTNTEPTLVLPQVEPTQRRRRRKKEESP) form a disordered region. Positions 2727-3393 (VVAGSAVVCG…ILQLLALANG (667 aa)) constitute an FAT domain. The Bipartite nuclear localization signal motif lies at 3233-3249 (RKHKTKELEVFIKRFKS). In terms of domain architecture, PI3K/PI4K catalytic spans 3499 to 3811 (LSDSVTVMNG…GNKDATRALM (313 aa)). Residues 3505-3511 (VMNGINA) form a G-loop region. The catalytic loop stretch occupies residues 3678–3686 (GLGDRHAMN). The segment at 3698-3722 (HIDLGVAFEQGLMLKTPERVPFRLT) is activation loop. The FATC domain maps to 3824-3856 (EMRSIHGQAQQLIQDAIDTDRLSHMFPGWGAWM).

Belongs to the PI3/PI4-kinase family. Interacts with RUG3. In terms of tissue distribution, ubiquitously expressed at low levels with slightly higher levels in flower buds.

Its subcellular location is the nucleus. The enzyme catalyses L-seryl-[protein] + ATP = O-phospho-L-seryl-[protein] + ADP + H(+). It catalyses the reaction L-threonyl-[protein] + ATP = O-phospho-L-threonyl-[protein] + ADP + H(+). Functionally, serine/threonine protein kinase which activates checkpoint signaling upon genotoxic stresses such as ionizing radiation (IR) or DNA replication stalling. Plays a central role in the perception and response to both stress-induced damage in somatic cells and developmentally programmed DNA damage during meiosis. Recognizes the substrate consensus sequence [ST]-Q. Phosphorylates histone variant H2AX to form H2AXS139ph at double strand breaks (DSBs), thereby regulating DNA damage response mechanism. Involved in transcriptional regulation of RAD51, PARP1, GR1, and LIG4 in response to DNA double strand breaks. Plays a dual role by activating the DNA damage response at dysfunctional telomeres and yet preventing this activation at functional telomeres. Not required for telomere length homeostasis. Regulates DNA damage response (DDR) synergistically with RUG3. Together with RUG3, involved in the splicing of the ND2/NAD2 mRNA. The sequence is that of Serine/threonine-protein kinase ATM from Arabidopsis thaliana (Mouse-ear cress).